The following is a 483-amino-acid chain: Scarecrow-like protein 26 (483 aa).

One can recognise a GRAS domain in the interval 95 to 477 (KTDESKGLRL…RRLVSASFWA (383 aa)). A leucine repeat I (LRI) region spans residues 102–165 (LRLVHLLVAA…SKLLERDSVL (64 aa)). The segment at 184-251 (FELLQNMSPY…PSAQHLRITA (68 aa)) is VHIID. The VHIID signature appears at 215 to 219 (IHIVD). Residues 267-299 (ETGRRLTAFADSIGQPFSYQHCKLDTNAFSTSS) are leucine repeat II (LRII). A PFYRE region spans residues 308–400 (VVINCMLHLP…RVFIGPWVAN (93 aa)). Positions 403–477 (TRITANDAEV…RRLVSASFWA (75 aa)) are SAW.

This sequence belongs to the GRAS family. Expressed in seedlings, roots, leaves and flowers.

It localises to the nucleus. Its function is as follows. Probable transcription factor involved in plant development. This chain is Scarecrow-like protein 26 (SCL26), found in Arabidopsis thaliana (Mouse-ear cress).